The following is a 1088-amino-acid chain: RNA-directed RNA polymerase (1088 aa).

One can recognise a RdRp catalytic domain in the interval Leu-501 to Ile-687.

It belongs to the reoviridae RNA-directed RNA polymerase family. Interacts with VP3 (Potential). Interacts with VP2; this interaction activates VP1. Interacts with NSP5; this interaction is probably necessary for the formation of functional virus factories. Interacts with NSP2; this interaction is weak. Requires Mg(2+) as cofactor.

It is found in the virion. The catalysed reaction is RNA(n) + a ribonucleoside 5'-triphosphate = RNA(n+1) + diphosphate. Its function is as follows. RNA-directed RNA polymerase that is involved in both transcription and genome replication. Together with VP3 capping enzyme, forms an enzyme complex positioned near the channels situated at each of the five-fold vertices of the core. Following infection, the outermost layer of the virus is lost, leaving a double-layered particle (DLP) made up of the core and VP6 shell. VP1 then catalyzes the transcription of fully conservative plus-strand genomic RNAs that are extruded through the DLP's channels into the cytoplasm where they function as mRNAs for translation of viral proteins. One copy of each of the viral (+)RNAs is also recruited during core assembly, together with newly synthesized polymerase complexes and VP2. The polymerase of these novo-formed particles catalyzes the synthesis of complementary minus-strands leading to dsRNA formation. To do so, the polymerase specifically recognizes and binds 4 bases 5'-UGUG-3' in the conserved 3'-sequence of plus-strand RNA templates. VP2 presumably activates the autoinhibited VP1-RNA complex to coordinate packaging and genome replication. Once dsRNA synthesis is complete, the polymerase switches to the transcriptional mode, thus providing secondary transcription. This chain is RNA-directed RNA polymerase, found in Rotavirus A (strain RVA/Human/Japan/KU/1995/G1P1A[8]) (RV-A).